A 92-amino-acid chain; its full sequence is MVRSVWKGPFVEGSLLKKADAARASGRHDVIKIWSRRSTILPQFVGLVFGVYNGHKHVPVSVNEEMVGHKFGEFSPTRTFHGHSGDKKAKRA.

The protein belongs to the universal ribosomal protein uS19 family.

Functionally, protein S19 forms a complex with S13 that binds strongly to the 16S ribosomal RNA. This is Small ribosomal subunit protein uS19 from Nitrobacter hamburgensis (strain DSM 10229 / NCIMB 13809 / X14).